The primary structure comprises 186 residues: Elongation factor P (186 aa).

Belongs to the elongation factor P family.

Its subcellular location is the cytoplasm. It participates in protein biosynthesis; polypeptide chain elongation. Involved in peptide bond synthesis. Stimulates efficient translation and peptide-bond synthesis on native or reconstituted 70S ribosomes in vitro. Probably functions indirectly by altering the affinity of the ribosome for aminoacyl-tRNA, thus increasing their reactivity as acceptors for peptidyl transferase. The chain is Elongation factor P from Synechococcus sp. (strain CC9902).